A 246-amino-acid polypeptide reads, in one-letter code: Large ribosomal subunit protein uL30 (246 aa).

Belongs to the universal ribosomal protein uL30 family.

Binds to G-rich structures in 28S rRNA and in mRNAs. Plays a regulatory role in the translation apparatus; inhibits cell-free translation of mRNAs. The chain is Large ribosomal subunit protein uL30 (rpl7) from Dictyostelium discoideum (Social amoeba).